The sequence spans 431 residues: Pheromone alpha factor receptor (431 aa).

Residues 1-49 lie on the Extracellular side of the membrane; the sequence is MSDAAPSLSNLFYDPTYNPGQSTINYTSIYGNGSTITFDELQGLVNSTV. 2 N-linked (GlcNAc...) asparagine glycosylation sites follow: Asn25 and Asn32. Residues 50–72 traverse the membrane as a helical segment; that stretch reads TQAIMFGVRCGAAALTLIVMWMT. The short motif at 53–61 is the Glycine zipper motif element; it reads IMFGVRCGA. The Cytoplasmic portion of the chain corresponds to 73 to 78; the sequence is SRSRKT. The chain crosses the membrane as a helical span at residues 79–102; sequence PIFIINQVSLFLIILHSALYFKYL. Residues 103-132 lie on the Extracellular side of the membrane; it reads LSNYSSVTYALTGFPQFISRGDVHVYGATN. A helical transmembrane segment spans residues 133 to 156; sequence IIQVLLVASIETSLVFQIKVIFTG. At 157–163 the chain is on the cytoplasmic side; it reads DNFKRIG. The helical transmembrane segment at 164-188 threads the bilayer; the sequence is LMLTSISFTLGIATVTMYFVSAVKG. Over 189–205 the chain is Extracellular; it reads MIVTYNDVSATQDKYFN. Residues 206 to 230 form a helical membrane-spanning segment; the sequence is ASTILLASSINFMSFVLVVKLILAI. Topologically, residues 231 to 241 are cytoplasmic; sequence RSRRFLGLKQF. The chain crosses the membrane as a helical span at residues 242 to 266; the sequence is DSFHILLIMSCQSLLVPSIIFILAY. The Extracellular segment spans residues 267-275; the sequence is SLKPNQGTD. Residues 276 to 299 form a helical membrane-spanning segment; sequence VLTTVATLLAVLSLPLSSMWATAA. Residues 300–431 lie on the Cytoplasmic side of the membrane; the sequence is NNASKTNTIT…KFWTEDNNNL (132 aa). A phosphoserine mark is found at Ser310 and Ser315. The residue at position 329 (Thr329) is a Phosphothreonine. Residue Ser331 is modified to Phosphoserine. Lys337 is covalently cross-linked (Glycyl lysine isopeptide (Lys-Gly) (interchain with G-Cter in ubiquitin)). Ser360 bears the Phosphoserine mark. A Phosphothreonine modification is found at Thr363. Residue Ser366 is modified to Phosphoserine. Lys374 participates in a covalent cross-link: Glycyl lysine isopeptide (Lys-Gly) (interchain with G-Cter in ubiquitin). Positions 379–389 are enriched in polar residues; it reads QLPTPTSSKNT. The disordered stretch occupies residues 379–406; that stretch reads QLPTPTSSKNTRIGPFADASYKEGEVEP. Thr382 carries the phosphothreonine modification. Phosphoserine occurs at positions 385 and 386. A Glycyl lysine isopeptide (Lys-Gly) (interchain with G-Cter in ubiquitin) cross-link involves residue Lys400. 2 positions are modified to phosphothreonine: Thr411 and Thr414. Residue Lys422 forms a Glycyl lysine isopeptide (Lys-Gly) (interchain with G-Cter in ubiquitin) linkage.

It belongs to the G-protein coupled receptor 4 family. As to quaternary structure, homodimer. Might also for higher order homooligomers such as homotetramers. Oligomerization is mediated significantly by transmembrane domain 1 (TMD1), possibly in concert with the N-terminal extracellular domain and TMD2. Interaction with GPA1, its dedicated G-alpha protein. Post-translationally, undergoes hyperphosphorylation of the C-terminal cytoplasmic domain after binding of the alpha-factor, which leads to internalization by endocytosis. In terms of processing, monoubiquitination at Lys-337 triggers internalization of STE2. N-glycosylated. N-glycosylation may be involved in the sorting process for misfolded STE2 protein. As to expression, expressed in MATa strains but not in MATalpha strains.

The protein localises to the cell membrane. Its function is as follows. Fungal class D1 G-protein-coupled receptor that acts as an alpha-factor pheromone receptor performing pheromone-dependent signal transduction involved in cellular conjugation, mating projection assembly, and in cell fusion. Following alpha-factor-binding, the signal is transmitted via a tripartite G protein consisting of alpha-, beta- and gamma-subunits (GAP1, STE4 and STE8 respectively) that prepares the cell for conjugation. In the inactive state, the cytoplasmic end of transmembrane domain 7 (TMD7) is unstructured and packs between TMD1-6, blocking the G protein coupling site. Agonist binding results in the outward movement of the extracellular ends of TMD6 and TMD7 by 6 Angstroms. On the intracellular surface, the G protein coupling site is formed by a 20 Angstroms outward movement of the unstructured region in TMD7 that unblocks the site, and a 12 Angstroms inward movement of TMD6. The protein is Pheromone alpha factor receptor (STE2) of Saccharomyces cerevisiae (strain ATCC 204508 / S288c) (Baker's yeast).